Consider the following 261-residue polypeptide: Oxidoreductase ptaF (261 aa).

This sequence belongs to the avfA family.

It functions in the pathway secondary metabolite biosynthesis. Oxidoreductase; part of the gene cluster that mediates the biosynthesis of pestheic acid, a diphenyl ether which is a biosynthetic precursor of the unique chloropupukeananes. The biosynthesis initiates from condensation of acetate and malonate units catalyzed by the non-reducing PKS ptaA. As the ptaA protein is TE/CLC domain-deficient, hydrolysis and Claisen cyclization of the polyketide could be catalyzed by ptaB containing a beta-lactamase domain. The ptaB protein might hydrolyze the thioester bond between the ACP of ptaA and the intermediate to release atrochrysone carboxylic acid, which is spontaneously dehydrated to form endocrocin anthrone. Endocrocin anthrone is then converted to endocrocin, catalyzed by the anthrone oxygenase ptaC. Spontaneous decarboxylation of endocrocin occurs to generate emodin. An O-methyltransferase (ptaH or ptaI) could methylate emodin to form physcion. PtaJ could then catalyze the oxidative cleavage of physcion, and rotation of the intermediate could then afford desmethylisosulochrin. PtaF, a putative NADH-dependent oxidoreductase, might also participate in the oxidative cleavage step. Desmethylisosulochrin is then transformed by another O-methyltransferase (ptaH or ptaI) to form isosulochrin. Chlorination of isosulochrin by ptaM in the cyclohexadienone B ring then produces chloroisosulochrin. PtaE is responsible for the oxidative coupling reactions of both benzophenones isosulouchrin and chloroisosulochrin to RES-1214-1 and pestheic acid respectively, regardless of chlorination. The protein is Oxidoreductase ptaF of Pestalotiopsis fici (strain W106-1 / CGMCC3.15140).